The chain runs to 609 residues: Heat shock factor protein (609 aa).

The segment covering 1 to 33 (MIQTASTISSNGGTNQGMESSSANSPEMNGTQN) has biased composition (polar residues). Residues 1 to 47 (MIQTASTISSNGGTNQGMESSSANSPEMNGTQNSMSVGMSGSGSSQN) are disordered. Over residues 34–45 (SMSVGMSGSGSS) the composition is skewed to low complexity. The DNA-binding element occupies 50 to 156 (ITQFSNKLYN…LLCLVTRKKA (107 aa)). Disordered stretches follow at residues 255–298 (PTVS…GKYR), 310–371 (SSFN…TDPK), 411–445 (NNTS…QPVQ), and 567–609 (SNGN…SIGA). Composition is skewed to polar residues over residues 257–277 (VSPT…TTAN), 339–360 (DSFN…TDVP), 422–443 (YRGS…NLQP), and 567–597 (SNGN…SSPR). Residue Ser350 is modified to Phosphoserine. Basic residues predominate over residues 598 to 609 (QVRKKRKSSIGA).

It belongs to the HSF family. Homotrimer.

It is found in the nucleus. Its function is as follows. DNA-binding protein that specifically binds heat shock promoter elements (HSE) and activates transcription. Also required for growth at normal temperatures. The polypeptide is Heat shock factor protein (hsf1) (Schizosaccharomyces pombe (strain 972 / ATCC 24843) (Fission yeast)).